Reading from the N-terminus, the 523-residue chain is (R)-citramalate synthase (523 aa).

The Pyruvate carboxyltransferase domain maps to Val-6–Lys-272.

The protein belongs to the alpha-IPM synthase/homocitrate synthase family.

The catalysed reaction is pyruvate + acetyl-CoA + H2O = (3R)-citramalate + CoA + H(+). It participates in amino-acid biosynthesis; L-isoleucine biosynthesis; 2-oxobutanoate from pyruvate: step 1/3. With respect to regulation, inhibited by isoleucine. Its function is as follows. Catalyzes the condensation of pyruvate and acetyl-coenzyme A to form (R)-citramalate. Makes part of a pathway for isoleucine biosynthesis, i.e. the citramalate-dependent pathway. Also displays a low alpha-isopropylmalate synthase activity, using 2-oxoisovalerate as substrate, but is unable to use 2-oxoglutarate. This chain is (R)-citramalate synthase, found in Sulfolobus acidocaldarius (strain ATCC 33909 / DSM 639 / JCM 8929 / NBRC 15157 / NCIMB 11770).